Here is a 725-residue protein sequence, read N- to C-terminus: MAATATKTIDFAAERALAKDFLANFAGPRGEPKYLNILQDVANRKIRAVQIELDDLFHYKDADDEFLQRVTENTKRYIGIFADAIDELMPESTEAYAVDEDRDILMTQRVDEGADGGADGTDPLQRMPPEIRRFFEVYIKAFSKVTPLTIRQVKASNIGQLVKISGIVTRCSDVKPLMQVAVYTCEECGFEIYQEVTARVFMPLFECPSQRCKLNKAKGNLILQLRASKFLKFQEVKLQELAEHVPKGHIPRSLTVHLRGELTRKVAPGDVVEMSGIFLPMPYYGFRAMRAGLVADTYLESMSITHFKKKYEEYELKGDEQEQIDRLAEDGDIYNKLARSLAPEIFGHEDVKKALLLLLVGAPHRKLTDGMKIRGDLHICLMGDPGVAKSQLLKHIINVAPRGVYTTGRGSSGVGLTAAVQKDPVTNEFVLEGGALVLADMGICAIDEFDKMEESDRTAIHEVMEQQTVSIAKAGITTSLNARTAVLAAANPAWGRYDMRRTPAENINLPPALLSRFDLLWLILDRADMETDLEMARHVVHVHQNLESPALGFTPLEPPVLRAYISAARRVVPSVPRELEEYIATAYSSIRQEEAKSNAPHSYTTIRTLLSILRISIALARLRFSETVAQSDVDEALRLMQMSKYSLYSDDRQRSGLDAISDIYSILRDEAARTNSMDVRYAHALNLISRKGYSEAQLKECLEEYASLNVWQIHPNTFDIHFIDA.

The region spanning Ile-333 to His-538 is the MCM domain. Gly-383 to Ser-390 provides a ligand contact to ATP. The short motif at Ser-515 to Asp-518 is the Arginine finger element.

It belongs to the MCM family. As to quaternary structure, component of the minichromosome maintenance (MCM) complex, a heterotetramer composed of MCM2, MCM3, MCM4, MCM5, MCM6 and MCM7.

The protein localises to the nucleus. The catalysed reaction is ATP + H2O = ADP + phosphate + H(+). Probable component of the MCM2-7 complex (MCM complex) that may function as a DNA helicase and which is essential to undergo a single round of replication initiation and elongation per cell cycle in eukaryotic cells. This is DNA replication licensing factor MCM7 (MCM7) from Oryza sativa subsp. indica (Rice).